A 412-amino-acid polypeptide reads, in one-letter code: Subtilisin-like protease 6 (412 aa).

Positions 1-20 (MGFITKAIPIVLAALSTVNG) are cleaved as a signal peptide. The propeptide occupies 21-127 (ARILEAGPHA…VRATTNGTNL (107 aa)). The Inhibitor I9 domain occupies 36 to 120 (KYIVVMKKDV…FIEPDFVVRA (85 aa)). Asn123 and Asn126 each carry an N-linked (GlcNAc...) asparagine glycan. The region spanning 135–412 (SWGLARVSTR…SKLIYNGSGK (278 aa)) is the Peptidase S8 domain. Active-site charge relay system residues include Asp167 and His198. N-linked (GlcNAc...) asparagine glycosylation is found at Asn252, Asn264, and Asn325. Residue Ser358 is the Charge relay system of the active site. N-linked (GlcNAc...) asparagine glycosylation occurs at Asn408.

Belongs to the peptidase S8 family.

It localises to the secreted. Secreted subtilisin-like serine protease with keratinolytic activity that contributes to pathogenicity. This Trichophyton verrucosum (Cattle ringworm fungus) protein is Subtilisin-like protease 6 (SUB6).